A 200-amino-acid chain; its full sequence is LHFPL tetraspan subfamily member 7 protein (200 aa).

The next 4 membrane-spanning stretches (helical) occupy residues 5–27 (VWVA…PAWF), 68–88 (VSAV…IFLL), 113–133 (AATA…SPFI), and 150–170 (LGWG…LPII).

Belongs to the TMEM211 family.

Its subcellular location is the membrane. This chain is LHFPL tetraspan subfamily member 7 protein, found in Homo sapiens (Human).